Reading from the N-terminus, the 197-residue chain is ATP-dependent Clp protease proteolytic subunit (197 aa).

The Nucleophile role is filled by serine 101. Residue histidine 126 is part of the active site.

It belongs to the peptidase S14 family. As to quaternary structure, component of the chloroplastic Clp protease core complex.

It localises to the plastid. Its subcellular location is the chloroplast stroma. The catalysed reaction is Hydrolysis of proteins to small peptides in the presence of ATP and magnesium. alpha-casein is the usual test substrate. In the absence of ATP, only oligopeptides shorter than five residues are hydrolyzed (such as succinyl-Leu-Tyr-|-NHMec, and Leu-Tyr-Leu-|-Tyr-Trp, in which cleavage of the -Tyr-|-Leu- and -Tyr-|-Trp bonds also occurs).. In terms of biological role, cleaves peptides in various proteins in a process that requires ATP hydrolysis. Has a chymotrypsin-like activity. Plays a major role in the degradation of misfolded proteins. The protein is ATP-dependent Clp protease proteolytic subunit of Daucus carota (Wild carrot).